Reading from the N-terminus, the 431-residue chain is 3-phosphoshikimate 1-carboxyvinyltransferase (431 aa).

K26, S27, and R31 together coordinate 3-phosphoshikimate. K26 lines the phosphoenolpyruvate pocket. G99 and R127 together coordinate phosphoenolpyruvate. Residues S170, S171, Q172, S199, E314, and H343 each contribute to the 3-phosphoshikimate site. Phosphoenolpyruvate is bound at residue Q172. E314 (proton acceptor) is an active-site residue. 3 residues coordinate phosphoenolpyruvate: R347, R388, and K413.

This sequence belongs to the EPSP synthase family. As to quaternary structure, monomer.

The protein localises to the cytoplasm. The catalysed reaction is 3-phosphoshikimate + phosphoenolpyruvate = 5-O-(1-carboxyvinyl)-3-phosphoshikimate + phosphate. It functions in the pathway metabolic intermediate biosynthesis; chorismate biosynthesis; chorismate from D-erythrose 4-phosphate and phosphoenolpyruvate: step 6/7. Catalyzes the transfer of the enolpyruvyl moiety of phosphoenolpyruvate (PEP) to the 5-hydroxyl of shikimate-3-phosphate (S3P) to produce enolpyruvyl shikimate-3-phosphate and inorganic phosphate. This is 3-phosphoshikimate 1-carboxyvinyltransferase from Mycobacterium marinum (strain ATCC BAA-535 / M).